The following is a 464-amino-acid chain: tRNA modification GTPase MnmE (464 aa).

Residues arginine 25, glutamate 87, and lysine 130 each contribute to the (6S)-5-formyl-5,6,7,8-tetrahydrofolate site. The 161-residue stretch at 226 to 386 folds into the TrmE-type G domain; sequence GLSVVLAGQP…LRAELLRIAG (161 aa). K(+) is bound at residue asparagine 236. Residues 236-241, 255-261, and 280-283 each bind GTP; these read NVGKSS, TPIAGTT, and DTAG. A Mg(2+)-binding site is contributed by serine 240. Threonine 255, isoleucine 257, and threonine 260 together coordinate K(+). Residue threonine 261 coordinates Mg(2+). Lysine 464 contributes to the (6S)-5-formyl-5,6,7,8-tetrahydrofolate binding site.

Belongs to the TRAFAC class TrmE-Era-EngA-EngB-Septin-like GTPase superfamily. TrmE GTPase family. Homodimer. Heterotetramer of two MnmE and two MnmG subunits. K(+) is required as a cofactor.

It is found in the cytoplasm. Exhibits a very high intrinsic GTPase hydrolysis rate. Involved in the addition of a carboxymethylaminomethyl (cmnm) group at the wobble position (U34) of certain tRNAs, forming tRNA-cmnm(5)s(2)U34. The protein is tRNA modification GTPase MnmE of Burkholderia ambifaria (strain MC40-6).